Here is a 32-residue protein sequence, read N- to C-terminus: ATSAPAKHDNIXVPIAMFGGSXNYASHLYLYD.

The protein belongs to the ATPase delta chain family. In terms of assembly, F-type ATPases have 2 components, CF(1) - the catalytic core - and CF(0) - the membrane proton channel. CF(1) has five subunits: alpha(3), beta(3), gamma(1), delta(1), epsilon(1). CF(0) has three main subunits: a, b and c.

Its subcellular location is the mitochondrion. The protein localises to the mitochondrion inner membrane. Its function is as follows. Mitochondrial membrane ATP synthase (F(1)F(0) ATP synthase or Complex V) produces ATP from ADP in the presence of a proton gradient across the membrane which is generated by electron transport complexes of the respiratory chain. F-type ATPases consist of two structural domains, F(1) - containing the extramembraneous catalytic core and F(0) - containing the membrane proton channel, linked together by a central stalk and a peripheral stalk. During catalysis, ATP synthesis in the catalytic domain of F(1) is coupled via a rotary mechanism of the central stalk subunits to proton translocation. Part of the complex F(0) domain and the peripheric stalk, which acts as a stator to hold the catalytic alpha(3)beta(3) subcomplex and subunit a/ATP6 static relative to the rotary elements. The protein is ATP synthase subunit O, mitochondrial of Spinacia oleracea (Spinach).